The following is a 129-amino-acid chain: Small ribosomal subunit protein uS9 (129 aa).

The protein belongs to the universal ribosomal protein uS9 family.

The polypeptide is Small ribosomal subunit protein uS9 (Wolinella succinogenes (strain ATCC 29543 / DSM 1740 / CCUG 13145 / JCM 31913 / LMG 7466 / NCTC 11488 / FDC 602W) (Vibrio succinogenes)).